Here is a 501-residue protein sequence, read N- to C-terminus: Lysine--tRNA ligase (501 aa).

Positions 411 and 418 each coordinate Mg(2+).

It belongs to the class-II aminoacyl-tRNA synthetase family. Homodimer. Mg(2+) serves as cofactor.

Its subcellular location is the cytoplasm. It carries out the reaction tRNA(Lys) + L-lysine + ATP = L-lysyl-tRNA(Lys) + AMP + diphosphate. In Clostridium perfringens (strain 13 / Type A), this protein is Lysine--tRNA ligase.